Consider the following 661-residue polypeptide: Threonine--tRNA ligase (661 aa).

Positions 1-64 (MSQAISLTFP…TTGRIEIITR (64 aa)) constitute a TGS domain. Residues 245-546 (DHRRLGREMD…LIENFAGHMP (302 aa)) are catalytic. Zn(2+)-binding residues include Cys341, His392, and His523.

This sequence belongs to the class-II aminoacyl-tRNA synthetase family. In terms of assembly, homodimer. Requires Zn(2+) as cofactor.

Its subcellular location is the cytoplasm. The catalysed reaction is tRNA(Thr) + L-threonine + ATP = L-threonyl-tRNA(Thr) + AMP + diphosphate + H(+). Its function is as follows. Catalyzes the attachment of threonine to tRNA(Thr) in a two-step reaction: L-threonine is first activated by ATP to form Thr-AMP and then transferred to the acceptor end of tRNA(Thr). Also edits incorrectly charged L-seryl-tRNA(Thr). The polypeptide is Threonine--tRNA ligase (Rhizobium johnstonii (strain DSM 114642 / LMG 32736 / 3841) (Rhizobium leguminosarum bv. viciae)).